Consider the following 371-residue polypeptide: Bifunctional enzyme IspD/IspF (371 aa).

The interval 1–210 is 2-C-methyl-D-erythritol 4-phosphate cytidylyltransferase; that stretch reads MSEISLIMLA…LDLPKPSFEI (210 aa). Residues 211 to 371 form a 2-C-methyl-D-erythritol 2,4-cyclodiphosphate synthase region; that stretch reads FTGNGFDVHE…NLKYFDWTRL (161 aa). A divalent metal cation is bound by residues Asp-217 and His-219. 4-CDP-2-C-methyl-D-erythritol 2-phosphate-binding positions include 217–219 and 243–244; these read DVH and HS. Residue His-251 coordinates a divalent metal cation. 4-CDP-2-C-methyl-D-erythritol 2-phosphate is bound by residues 265–267, 270–274, 341–344, Phe-348, and Arg-351; these read DIG, YPDTD, and TTTE.

This sequence in the N-terminal section; belongs to the IspD/TarI cytidylyltransferase family. IspD subfamily. It in the C-terminal section; belongs to the IspF family. A divalent metal cation is required as a cofactor.

The enzyme catalyses 2-C-methyl-D-erythritol 4-phosphate + CTP + H(+) = 4-CDP-2-C-methyl-D-erythritol + diphosphate. It carries out the reaction 4-CDP-2-C-methyl-D-erythritol 2-phosphate = 2-C-methyl-D-erythritol 2,4-cyclic diphosphate + CMP. Its pathway is isoprenoid biosynthesis; isopentenyl diphosphate biosynthesis via DXP pathway; isopentenyl diphosphate from 1-deoxy-D-xylulose 5-phosphate: step 2/6. It functions in the pathway isoprenoid biosynthesis; isopentenyl diphosphate biosynthesis via DXP pathway; isopentenyl diphosphate from 1-deoxy-D-xylulose 5-phosphate: step 4/6. Bifunctional enzyme that catalyzes the formation of 4-diphosphocytidyl-2-C-methyl-D-erythritol from CTP and 2-C-methyl-D-erythritol 4-phosphate (MEP) (IspD), and catalyzes the conversion of 4-diphosphocytidyl-2-C-methyl-D-erythritol 2-phosphate (CDP-ME2P) to 2-C-methyl-D-erythritol 2,4-cyclodiphosphate (ME-CPP) with a corresponding release of cytidine 5-monophosphate (CMP) (IspF). In Campylobacter jejuni subsp. doylei (strain ATCC BAA-1458 / RM4099 / 269.97), this protein is Bifunctional enzyme IspD/IspF.